The chain runs to 354 residues: MADAITYADLRFVKVPLKNSASNHLGQDCEAYEDGELTYENVQVSPVPGGPPGLASPALADKAGVGSEQPTATWSSVNSSALRQIPRCPTVCLQYFLLGLLVSCLMLGVAVICLGVRYLQVSRQFQEGTRIWEATNSSLQQQLREKISQLGQKEVELQKARKELISSQDTLQEKQRTHEDAEQQLQACQAERAKTKENLKTEEERRRDLDQRLTSTRETLRRFFSDSSDTCCPCGWIPYQERCFYISHTLGSLEESQKYCTSLSSKLAAFDEPSKYYYEVSLPSGLEELLDRSKSYWIQMSKKWRQDSDSQSRHCVRIKTYYQKWERTISKCAELHPCICESEAFRFPDGINLN.

At 1 to 95 (MADAITYADL…PRCPTVCLQY (95 aa)) the chain is on the cytoplasmic side. Tyr-7 and Tyr-39 each carry phosphotyrosine; by LYN. A helical; Signal-anchor for type II membrane protein membrane pass occupies residues 96–116 (FLLGLLVSCLMLGVAVICLGV). At 117-354 (RYLQVSRQFQ…FRFPDGINLN (238 aa)) the chain is on the extracellular side. A glycan (N-linked (GlcNAc...) asparagine) is linked at Asn-136. One can recognise a C-type lectin domain in the interval 231–342 (CCPCGWIPYQ…AELHPCICES (112 aa)). Disulfide bonds link Cys-232–Cys-243, Cys-260–Cys-340, and Cys-315–Cys-332.

Homodimer; disulfide-linked. Associates with CD5. Interacts (tyrosine phosphorylated) with PTPN6/SHP-1. Phosphorylated upon engagement of the B-cell receptor, probably by LYN or SYK. Phosphorylation at Tyr-7 is important for interaction with PTPN6/SHP-1. Pre-B-cells and B-cells but not terminally differentiated plasma cells.

It localises to the membrane. Co-receptor of B cell receptor (BCR) that plays both positive and negative roles on B-cell functions. Recognizes the Sm/ribonucleoprotein (RNP) self-antigen ligand, and coligation of CD72 and BCR inhibits BCR signaling. Mechanistically, ligand binding leads to the recruitment of PTPN6/SHP-1 to the BCR complex which is inhibitory to BCR signaling. Acts also as a ligand for CD5 and thereby plays a critical role in maintaining regulatory T and B-cell homeostasis. This Mus musculus (Mouse) protein is B-cell differentiation antigen CD72 (Cd72).